We begin with the raw amino-acid sequence, 302 residues long: Bifunctional protein FolD (302 aa).

NADP(+) contacts are provided by residues 171-173, S196, and I237; that span reads GRS.

The protein belongs to the tetrahydrofolate dehydrogenase/cyclohydrolase family. Homodimer.

The enzyme catalyses (6R)-5,10-methylene-5,6,7,8-tetrahydrofolate + NADP(+) = (6R)-5,10-methenyltetrahydrofolate + NADPH. The catalysed reaction is (6R)-5,10-methenyltetrahydrofolate + H2O = (6R)-10-formyltetrahydrofolate + H(+). The protein operates within one-carbon metabolism; tetrahydrofolate interconversion. Catalyzes the oxidation of 5,10-methylenetetrahydrofolate to 5,10-methenyltetrahydrofolate and then the hydrolysis of 5,10-methenyltetrahydrofolate to 10-formyltetrahydrofolate. This Sphingopyxis alaskensis (strain DSM 13593 / LMG 18877 / RB2256) (Sphingomonas alaskensis) protein is Bifunctional protein FolD.